A 242-amino-acid polypeptide reads, in one-letter code: Phosphoribosylaminoimidazole-succinocarboxamide synthase (242 aa).

The protein belongs to the SAICAR synthetase family.

It carries out the reaction 5-amino-1-(5-phospho-D-ribosyl)imidazole-4-carboxylate + L-aspartate + ATP = (2S)-2-[5-amino-1-(5-phospho-beta-D-ribosyl)imidazole-4-carboxamido]succinate + ADP + phosphate + 2 H(+). It functions in the pathway purine metabolism; IMP biosynthesis via de novo pathway; 5-amino-1-(5-phospho-D-ribosyl)imidazole-4-carboxamide from 5-amino-1-(5-phospho-D-ribosyl)imidazole-4-carboxylate: step 1/2. This Cyanothece sp. (strain PCC 7425 / ATCC 29141) protein is Phosphoribosylaminoimidazole-succinocarboxamide synthase.